The following is a 707-amino-acid chain: Leucine-rich repeat neuronal protein 3 (707 aa).

A signal peptide spans 1–22; sequence MKDAPLQIHVLLGLAITALVQA. The LRRNT domain maps to 23–69; the sequence is GDKKVDCPQLCTCEIRPWFTPRSIYMEASTVDCNDLGLLNFPARLPA. The Extracellular segment spans residues 23 to 626; the sequence is GDKKVDCPQL…DGKENGKSHT (604 aa). 12 LRR repeats span residues 70–91, 93–114, 117–138, 141–162, 165–186, 189–210, 213–234, 237–258, 261–282, 285–304, 310–332, and 335–358; these read DTQI…TDFP, NLTG…NVQK, QLLS…CLYG, NLQE…AFVG, NLLR…WFEA, NLEI…NFQP, KLRS…ALVG, NLES…ALQK, NLKF…DFSN, HLKE…DSLA, DLRK…AFFR, and KLES…ESLP. Residues N93 and N103 are each glycosylated (N-linked (GlcNAc...) asparagine). N223 carries N-linked (GlcNAc...) asparagine glycosylation. One can recognise an LRRCT domain in the interval 368 to 421; sequence NPIRCDCVIRWINMNKTNIRFMEPDSLFCVDPPEFQGQNVRQVHFRDMMEICLP. The N-linked (GlcNAc...) asparagine glycan is linked to N382. The region spanning 421–514 is the Ig-like C2-type domain; the sequence is PLIAPESFPS…DLKSIMIKVG (94 aa). The cysteines at positions 444 and 496 are disulfide-linked. N-linked (GlcNAc...) asparagine glycans are attached at residues N522, N579, and N608. Positions 523 to 614 constitute a Fibronectin type-III domain; the sequence is GSLNIKIRDI…QCVNVTTKSL (92 aa). A helical transmembrane segment spans residues 627–647; the sequence is VFVACVGGLLGIIGVMCLFGC. The Cytoplasmic segment spans residues 648-707; the sequence is VSQEGNCENEHSYTVNHCHKPTLAFSELYPPLINLWESSKEKPASLEVKATAIGVPTSMS.

The protein resides in the membrane. The sequence is that of Leucine-rich repeat neuronal protein 3 (Lrrn3) from Rattus norvegicus (Rat).